The sequence spans 117 residues: uncharacterized protein (117 aa).

Residues 1–23 form the signal peptide; the sequence is MVSEAEFMAALAKFAETSATASA.

This is an uncharacterized protein from Archaeoglobus fulgidus (strain ATCC 49558 / DSM 4304 / JCM 9628 / NBRC 100126 / VC-16).